We begin with the raw amino-acid sequence, 188 residues long: Elongation factor P (188 aa).

Position 34 is an N6-(3,6-diaminohexanoyl)-5-hydroxylysine (lysine 34).

The protein belongs to the elongation factor P family. Is beta-lysylated on the epsilon-amino group of Lys-34 by the combined action of EpmA and EpmB, and then hydroxylated on the C5 position of the same residue by EpmC. Lysylation is critical for the stimulatory effect of EF-P on peptide-bond formation. The lysylation moiety would extend toward the peptidyltransferase center and stabilize the terminal 3-CCA end of the tRNA. The hydroxylation of the C5 position on Lys-34 would allow additional potential stabilizing hydrogen-bond interactions with the P-tRNA.

It is found in the cytoplasm. It participates in protein biosynthesis; polypeptide chain elongation. Involved in peptide bond synthesis. Alleviates ribosome stalling that occurs when 3 or more consecutive Pro residues or the sequence PPG is present in a protein, possibly by augmenting the peptidyl transferase activity of the ribosome. Modification of Lys-34 is required for alleviation. In Shigella boydii serotype 18 (strain CDC 3083-94 / BS512), this protein is Elongation factor P.